The primary structure comprises 519 residues: Bifunctional dihydrofolate reductase-thymidylate synthase 1 (519 aa).

Ala2 carries the N-acetylalanine modification. One can recognise a DHFR domain in the interval 21 to 198 (TYQVVVAATK…LRFCFTTFVR (178 aa)). Residue Val25 coordinates substrate. NADP(+) contacts are provided by residues Ala27 and 33-39 (GIGKDGK). Asp47 contributes to the substrate binding site. NADP(+)-binding positions include 71–73 (RKT) and 92–95 (LTRS). Residue Ile134 participates in substrate binding. Residue 135–142 (GGGDILRE) participates in NADP(+) binding. Residue Thr155 coordinates substrate. A hinge region spans residues 201–234 (SSADESSDESNGSQSLQFDGKKFLFLPKMVFDQH). The thymidylate synthase stretch occupies residues 235–519 (EEFLYLNMVE…HKKIEMKMAV (285 aa)). Arg256 lines the dUMP pocket. Residue Cys401 is part of the active site. Residues His402, 420–424 (QRSAD), Asn432, and 462–464 (HVY) each bind dUMP.

In the N-terminal section; belongs to the dihydrofolate reductase family. The protein in the C-terminal section; belongs to the thymidylate synthase family. In terms of assembly, heterodimer or homodimer.

It catalyses the reaction (6S)-5,6,7,8-tetrahydrofolate + NADP(+) = 7,8-dihydrofolate + NADPH + H(+). The enzyme catalyses dUMP + (6R)-5,10-methylene-5,6,7,8-tetrahydrofolate = 7,8-dihydrofolate + dTMP. Its pathway is cofactor biosynthesis; tetrahydrofolate biosynthesis; 5,6,7,8-tetrahydrofolate from 7,8-dihydrofolate: step 1/1. Its function is as follows. Bifunctional enzyme. Involved in de novo dTMP biosynthesis. Key enzyme in folate metabolism. Can play two different roles depending on the source of dihydrofolate: de novo synthesis of tetrahydrofolate or recycling of the dihydrofolate released as one of the end products of the TS catalyzed reaction. Catalyzes an essential reaction for de novo glycine and purine synthesis, DNA precursor synthesis, and for the conversion of dUMP to dTMP. In Arabidopsis thaliana (Mouse-ear cress), this protein is Bifunctional dihydrofolate reductase-thymidylate synthase 1 (THY-1).